Reading from the N-terminus, the 75-residue chain is UPF0512 protein C (75 aa).

The protein belongs to the UPF0512 family.

The chain is UPF0512 protein C from Dictyostelium discoideum (Social amoeba).